The following is a 115-amino-acid chain: uncharacterized protein (115 aa).

This is an uncharacterized protein from Bacillus subtilis (strain 168).